The following is a 330-amino-acid chain: Neurogenic differentiation factor 4 (330 aa).

The interval 1–79 (MTKTYTKAKE…RGPKKKKMTK (79 aa)) is disordered. Over residues 25 to 35 (LSSKDELKAEN) the composition is skewed to basic and acidic residues. Residues 52-64 (DSIEEEEEEEDDG) show a composition bias toward acidic residues. The span at 67–79 (PKRRGPKKKKMTK) shows a compositional bias: basic residues. Positions 73–79 (KKKKMTK) match the Nuclear localization signal motif. The bHLH domain maps to 87 to 139 (ARRVKANARERTRMHGLNDALDNLRRVMPCYSKTQKLSKIETLRLARNYIWAL). A leucine-zipper region spans residues 162 to 183 (LSQPTSNLVAGCLQLGPQTLFL).

Efficient DNA binding requires dimerization with another bHLH protein. Serine or threonine phosphorylation within the basic region may regulate neurogenic activity. As to expression, expressed in both the developing central nervous system and peripheral nervous system.

It is found in the nucleus. Probably acts as a transcriptional activator. Mediates neuronal differentiation. Required for the regulation of amacrine cell fate specification in the retina. The sequence is that of Neurogenic differentiation factor 4 (NEUROD4) from Gallus gallus (Chicken).